Reading from the N-terminus, the 85-residue chain is Small ribosomal subunit protein bS16c (85 aa).

Belongs to the bacterial ribosomal protein bS16 family.

It is found in the plastid. Its subcellular location is the chloroplast. The sequence is that of Small ribosomal subunit protein bS16c from Nicotiana tabacum (Common tobacco).